A 139-amino-acid polypeptide reads, in one-letter code: uncharacterized protein (139 aa).

Residues 1 to 116 (MYNPWQVGAS…TRPRVVARGK (116 aa)) form a disordered region. Low complexity-rich tracts occupy residues 50–70 (RPRP…GPRP) and 84–110 (LPAY…TRPR).

This is an uncharacterized protein from Homo sapiens (Human).